The following is a 114-amino-acid chain: uncharacterized protein (114 aa).

3 helical membrane passes run 21-41 (LASS…VCLF), 65-85 (GCFS…SALI), and 93-113 (LSVF…ILTD).

It is found in the membrane. This is an uncharacterized protein from Saccharomyces cerevisiae (strain ATCC 204508 / S288c) (Baker's yeast).